A 37-amino-acid polypeptide reads, in one-letter code: Cytochrome b6-f complex subunit 5 (37 aa).

Residues 5-25 (LLSGIVLGLIVVTLSGLFYAA) traverse the membrane as a helical segment.

This sequence belongs to the PetG family. The 4 large subunits of the cytochrome b6-f complex are cytochrome b6, subunit IV (17 kDa polypeptide, PetD), cytochrome f and the Rieske protein, while the 4 small subunits are PetG, PetL, PetM and PetN. The complex functions as a dimer.

Its subcellular location is the cellular thylakoid membrane. Component of the cytochrome b6-f complex, which mediates electron transfer between photosystem II (PSII) and photosystem I (PSI), cyclic electron flow around PSI, and state transitions. PetG is required for either the stability or assembly of the cytochrome b6-f complex. The protein is Cytochrome b6-f complex subunit 5 of Trichormus variabilis (strain ATCC 29413 / PCC 7937) (Anabaena variabilis).